We begin with the raw amino-acid sequence, 156 residues long: Ribosomal RNA large subunit methyltransferase H (156 aa).

S-adenosyl-L-methionine-binding positions include Leu73, Gly104, and 123 to 128 (LSALTL).

The protein belongs to the RNA methyltransferase RlmH family. As to quaternary structure, homodimer.

The protein localises to the cytoplasm. The enzyme catalyses pseudouridine(1915) in 23S rRNA + S-adenosyl-L-methionine = N(3)-methylpseudouridine(1915) in 23S rRNA + S-adenosyl-L-homocysteine + H(+). In terms of biological role, specifically methylates the pseudouridine at position 1915 (m3Psi1915) in 23S rRNA. This chain is Ribosomal RNA large subunit methyltransferase H, found in Erwinia tasmaniensis (strain DSM 17950 / CFBP 7177 / CIP 109463 / NCPPB 4357 / Et1/99).